A 351-amino-acid polypeptide reads, in one-letter code: MTATIKLGQLAEFLGATLSGDGEKEITGLATLQEAGPAQLSFLANPQYRKYLVDCQAGAVLLKAADAEAYAGDALVVADPYLAYARISHLFDPKPKAQAGVHPSAVIAADAQVDPAASIGPFAVIESGARIAAGVTIGAHCFIGARCEIGEGGWLAPRVTLYHDVRIGKRVVIQSGAVLGGEGFGFANEKGVWQKIAQIGGVTIGDDVEIGVNTAIDRGALADTVIGNGVKLDNQIQIAHNVQVGDHTAMAACVGISGSTKIGKHCMLAGGVGLVGHIDICDNVFLTGMTMVTHSITEPGAYSSGTAMQPAAEWRKSAARIRQLDDLARRLRQLEKRVGDVTPGGNASSDG.

The active-site Proton acceptor is the histidine 240.

This sequence belongs to the transferase hexapeptide repeat family. LpxD subfamily. In terms of assembly, homotrimer.

The catalysed reaction is a UDP-3-O-[(3R)-3-hydroxyacyl]-alpha-D-glucosamine + a (3R)-hydroxyacyl-[ACP] = a UDP-2-N,3-O-bis[(3R)-3-hydroxyacyl]-alpha-D-glucosamine + holo-[ACP] + H(+). The protein operates within bacterial outer membrane biogenesis; LPS lipid A biosynthesis. Functionally, catalyzes the N-acylation of UDP-3-O-acylglucosamine using 3-hydroxyacyl-ACP as the acyl donor. Is involved in the biosynthesis of lipid A, a phosphorylated glycolipid that anchors the lipopolysaccharide to the outer membrane of the cell. The chain is UDP-3-O-acylglucosamine N-acyltransferase from Pseudomonas fluorescens (strain ATCC BAA-477 / NRRL B-23932 / Pf-5).